The following is a 339-amino-acid chain: MVREEITGSTQKLEWKCVESRVDSKRLYYGRFILSPLRKGQADTVGIALRRALLGEIEGTCITRAKFGNVPHEYSTIVGIEESIQEILLNLKEIVLRSNLYGVRDASICVKGPRYITAQDIILPPSVEIVDTAQPIANLREPIDFCIELQIKRDRGYHTELRKNSQDGSYPIDAVFMPVRNVNYSIFSCGNGNEKHEILFLEIWTNGSLTPKEALYEASRNLIDLFLPFIHTEEEGTSFEESKNRLTPPLLTFQKRFTNLKKNKKGIPLNCIFIDQLELPSRTYNCLKRANIHTLLDLLSKTEEDLMRINSFRMEDGKLIWDTLEKHLPIDLPKNKFSL.

The interval 1 to 233 is alpha N-terminal domain (alpha-NTD); sequence MVREEITGST…DLFLPFIHTE (233 aa). The alpha C-terminal domain (alpha-CTD) stretch occupies residues 266-339; that stretch reads GIPLNCIFID…IDLPKNKFSL (74 aa).

This sequence belongs to the RNA polymerase alpha chain family. In terms of assembly, in plastids the minimal PEP RNA polymerase catalytic core is composed of four subunits: alpha, beta, beta', and beta''. When a (nuclear-encoded) sigma factor is associated with the core the holoenzyme is formed, which can initiate transcription.

Its subcellular location is the plastid. The protein localises to the chloroplast. The catalysed reaction is RNA(n) + a ribonucleoside 5'-triphosphate = RNA(n+1) + diphosphate. Its function is as follows. DNA-dependent RNA polymerase catalyzes the transcription of DNA into RNA using the four ribonucleoside triphosphates as substrates. The sequence is that of DNA-directed RNA polymerase subunit alpha from Sorghum bicolor (Sorghum).